Here is a 479-residue protein sequence, read N- to C-terminus: Ribosomal RNA small subunit methyltransferase F (479 aa).

S-adenosyl-L-methionine is bound by residues 125-131, glutamate 149, glycine 177, and aspartate 194; that span reads AAAPGSK. Cysteine 247 serves as the catalytic Nucleophile.

It belongs to the class I-like SAM-binding methyltransferase superfamily. RsmB/NOP family.

The protein resides in the cytoplasm. It catalyses the reaction cytidine(1407) in 16S rRNA + S-adenosyl-L-methionine = 5-methylcytidine(1407) in 16S rRNA + S-adenosyl-L-homocysteine + H(+). In terms of biological role, specifically methylates the cytosine at position 1407 (m5C1407) of 16S rRNA. The protein is Ribosomal RNA small subunit methyltransferase F of Shigella flexneri serotype 5b (strain 8401).